The following is a 259-amino-acid chain: GTP-binding protein RHO4 (259 aa).

GTP is bound at residue 59–66 (GDGATGKT). Residues 81-89 (YVPTIFENY) carry the Effector region motif. Residues 107-111 (DTAGQ) and 165-168 (LKSD) each bind GTP. C256 bears the Cysteine methyl ester mark. A lipid anchor (S-geranylgeranyl cysteine) is attached at C256. A propeptide spans 257–259 (VVL) (removed in mature form).

Belongs to the small GTPase superfamily. Rho family.

It localises to the cell membrane. The chain is GTP-binding protein RHO4 (RHO4) from Eremothecium gossypii (strain ATCC 10895 / CBS 109.51 / FGSC 9923 / NRRL Y-1056) (Yeast).